We begin with the raw amino-acid sequence, 522 residues long: Glucose-1-phosphate adenylyltransferase large subunit 1, chloroplastic (522 aa).

Residues 1-54 (MVVSADCRISLSAPSCIRSSSTGLTRHIKLGSFCNGELMGKKLNLSQLPNIRLR) constitute a chloroplast transit peptide. Serine 428 is modified (phosphoserine).

Belongs to the bacterial/plant glucose-1-phosphate adenylyltransferase family. As to quaternary structure, heterotetramer. In terms of tissue distribution, leaves.

Its subcellular location is the plastid. The protein resides in the chloroplast. The enzyme catalyses alpha-D-glucose 1-phosphate + ATP + H(+) = ADP-alpha-D-glucose + diphosphate. It functions in the pathway glycan biosynthesis; starch biosynthesis. Activated by 3'phosphoglycerate, inhibited by orthophosphate. Allosteric regulation. Its function is as follows. This protein plays a role in synthesis of starch. It catalyzes the synthesis of the activated glycosyl donor, ADP-glucose from Glc-1-P and ATP. The polypeptide is Glucose-1-phosphate adenylyltransferase large subunit 1, chloroplastic (ADG2) (Arabidopsis thaliana (Mouse-ear cress)).